A 479-amino-acid polypeptide reads, in one-letter code: Ammonium transporter Rh type C (479 aa).

The Cytoplasmic portion of the chain corresponds to 1–9; it reads MAWNTNLRW. A helical transmembrane segment spans residues 10–30; sequence RLPLTCLLLQVIMVILFGVFV. The Extracellular portion of the chain corresponds to 31–60; sequence RYDFEADAHWWSERTHKNLSDMENEFYYRY. N-linked (GlcNAc...) asparagine glycosylation is present at Asn-48. Residues 61–81 form a helical membrane-spanning segment; sequence PSFQDVHVMVFVGFGFLMTFL. Topologically, residues 82 to 85 are cytoplasmic; the sequence is QRYG. A helical transmembrane segment spans residues 86 to 106; it reads FSAVGFNFLLAAFGIQWALLM. Residues 107–123 are Extracellular-facing; it reads QGWFHFLQDRYIVVGVE. A helical membrane pass occupies residues 124–144; sequence NLINADFCVASVCVAFGAVLG. The Cytoplasmic segment spans residues 145–148; sequence KVSP. A helical transmembrane segment spans residues 149-169; it reads IQLLIMTFFQVTLFAVNEFIL. The Extracellular segment spans residues 170-177; the sequence is LNLLKVKD. The chain crosses the membrane as a helical span at residues 178–200; sequence AGGSMTIHTFGAYFGLTVTRILY. Topologically, residues 201 to 218 are cytoplasmic; sequence RRNLEQSKERQNSVYQSD. Residues 219-239 form a helical membrane-spanning segment; it reads LFAMIGTLFLWMYWPSFNSAI. Topologically, residues 240 to 250 are extracellular; sequence SYHGDSQHRAA. Residues 251-271 traverse the membrane as a helical segment; sequence INTYCSLAACVLTSVAISSAL. Over 272–281 the chain is Cytoplasmic; sequence HKKGKLDMVH. Residues 282 to 302 traverse the membrane as a helical segment; sequence IQNATLAGGVAVGTAAEMMLM. Pro-303 is a topological domain (extracellular). A helical membrane pass occupies residues 304-324; sequence YGALIIGFVCGIISTLGFVYL. Topologically, residues 325–345 are cytoplasmic; it reads TPFLESRLHIQDTCGINNLHG. A helical membrane pass occupies residues 346–366; it reads IPGIIGGIVGAVTAASASLEV. At 367 to 394 the chain is on the extracellular side; that stretch reads YGKEGLVHSFDFQGFNGDWTARTQGKFQ. A helical transmembrane segment spans residues 395–415; it reads IYGLLVTLAMALMGGIIVGLI. The Cytoplasmic segment spans residues 416-479; it reads LRLPFWGQPS…PMASSVPLVP (64 aa).

Belongs to the ammonium transporter (TC 2.A.49) family. Rh subfamily. Homotrimer. N-glycosylated. As to expression, expressed in brain, testis, placenta, pancreas, esophagus and prostate. Expressed in squamous epithelial tissues (at protein level). Expressed in kidney.

The protein resides in the cell membrane. It is found in the apical cell membrane. It catalyses the reaction NH4(+)(in) = NH4(+)(out). It carries out the reaction methylamine(out) = methylamine(in). The enzyme catalyses CO2(out) = CO2(in). Ammonium transporter involved in the maintenance of acid-base homeostasis. Transports ammonium and its related derivative methylammonium across the plasma membrane of epithelial cells likely contributing to renal transepithelial ammonia transport and ammonia metabolism. Postulated to primarily mediate an electroneutral bidirectional transport of NH3 ammonia species according to a mechanism that implies interaction of an NH4(+) ion with acidic residues of the pore entry followed by dissociation of NH4(+) into NH3 and H(+). As a result NH3 transits through the central pore and is protonated on the extracellular side reforming NH4(+). May act as a CO2 channel providing for renal acid secretion. The protein is Ammonium transporter Rh type C (RHCG) of Homo sapiens (Human).